The sequence spans 248 residues: Coenzyme F420:L-glutamate ligase (248 aa).

GTP is bound by residues 15–18, 45–46, and Lys50; these read IPLI and ET. Asp115 is an a divalent metal cation binding site. A GTP-binding site is contributed by Asn118. A divalent metal cation is bound by residues Asp155, Ser156, and Gln213. 211-218 provides a ligand contact to GTP; sequence MGQSDEGI.

This sequence belongs to the CofE family. Homodimer. Mg(2+) is required as a cofactor. Mn(2+) serves as cofactor. The cofactor is K(+).

The catalysed reaction is oxidized coenzyme F420-0 + GTP + L-glutamate = oxidized coenzyme F420-1 + GDP + phosphate + H(+). The enzyme catalyses oxidized coenzyme F420-1 + GTP + L-glutamate = oxidized coenzyme F420-2 + GDP + phosphate + H(+). It participates in cofactor biosynthesis; coenzyme F420 biosynthesis. In terms of biological role, catalyzes the GTP-dependent successive addition of two or more gamma-linked L-glutamates to the L-lactyl phosphodiester of 7,8-didemethyl-8-hydroxy-5-deazariboflavin (F420-0) to form coenzyme F420-0-glutamyl-glutamate (F420-2) or polyglutamated F420 derivatives. This is Coenzyme F420:L-glutamate ligase from Methanococcus maripaludis (strain C6 / ATCC BAA-1332).